Consider the following 222-residue polypeptide: Charged multivesicular body protein 4b (222 aa).

Disordered regions lie at residues 1 to 21 and 177 to 222; these read MSLIGKLFGTGGKGAKGPSPQ and NLLE…WATA. Residues 21–182 adopt a coiled-coil conformation; that stretch reads QEAIQKLRDT…ELDKNLLEVQ (162 aa).

This sequence belongs to the SNF7 family. In terms of assembly, probable core component of the endosomal sorting required for transport complex III (ESCRT-III). ESCRT-III components are thought to multimerize to form a flat lattice on the perimeter membrane of the endosome.

It is found in the cytoplasm. It localises to the cytosol. The protein resides in the late endosome membrane. The protein localises to the midbody. Its function is as follows. Probable core component of the endosomal sorting required for transport complex III (ESCRT-III) which is involved in multivesicular bodies (MVBs) formation and sorting of endosomal cargo proteins into MVBs. MVBs contain intraluminal vesicles (ILVs) that are generated by invagination and scission from the limiting membrane of the endosome and mostly are delivered to lysosomes enabling degradation of membrane proteins, such as stimulated growth factor receptors, lysosomal enzymes and lipids. In Xenopus laevis (African clawed frog), this protein is Charged multivesicular body protein 4b (chmp4b).